The chain runs to 480 residues: Glycogen synthase (480 aa).

Residue Lys-15 participates in ADP-alpha-D-glucose binding.

It belongs to the glycosyltransferase 1 family. Bacterial/plant glycogen synthase subfamily.

It catalyses the reaction [(1-&gt;4)-alpha-D-glucosyl](n) + ADP-alpha-D-glucose = [(1-&gt;4)-alpha-D-glucosyl](n+1) + ADP + H(+). It participates in glycan biosynthesis; glycogen biosynthesis. Its function is as follows. Synthesizes alpha-1,4-glucan chains using ADP-glucose. The sequence is that of Glycogen synthase from Rhizobium tropici.